A 588-amino-acid polypeptide reads, in one-letter code: L-fucose isomerase (588 aa).

Catalysis depends on proton acceptor residues Glu335 and Asp359. Mn(2+)-binding residues include Glu335, Asp359, and His525.

It belongs to the L-fucose isomerase family. Mn(2+) serves as cofactor.

Its subcellular location is the cytoplasm. It carries out the reaction L-fucose = L-fuculose. It functions in the pathway carbohydrate degradation; L-fucose degradation; L-lactaldehyde and glycerone phosphate from L-fucose: step 1/3. Converts the aldose L-fucose into the corresponding ketose L-fuculose. The polypeptide is L-fucose isomerase (Streptococcus pneumoniae (strain JJA)).